A 69-amino-acid chain; its full sequence is Ribosome modulation factor (69 aa).

The protein belongs to the ribosome modulation factor family.

It is found in the cytoplasm. Functionally, during stationary phase, converts 70S ribosomes to an inactive dimeric form (100S ribosomes). This Chromohalobacter salexigens (strain ATCC BAA-138 / DSM 3043 / CIP 106854 / NCIMB 13768 / 1H11) protein is Ribosome modulation factor.